The following is a 200-amino-acid chain: Octanoyltransferase (200 aa).

A BPL/LPL catalytic domain is found at 27–200; that stretch reads GAEDDQLWLV…WAELFSARWR (174 aa). Residues 66 to 73, 134 to 136, and 147 to 149 contribute to the substrate site; these read RGGQITYH, SLG, and GIA. Cysteine 165 functions as the Acyl-thioester intermediate in the catalytic mechanism.

The protein belongs to the LipB family.

It is found in the cytoplasm. It catalyses the reaction octanoyl-[ACP] + L-lysyl-[protein] = N(6)-octanoyl-L-lysyl-[protein] + holo-[ACP] + H(+). The protein operates within protein modification; protein lipoylation via endogenous pathway; protein N(6)-(lipoyl)lysine from octanoyl-[acyl-carrier-protein]: step 1/2. Its function is as follows. Catalyzes the transfer of endogenously produced octanoic acid from octanoyl-acyl-carrier-protein onto the lipoyl domains of lipoate-dependent enzymes. Lipoyl-ACP can also act as a substrate although octanoyl-ACP is likely to be the physiological substrate. The sequence is that of Octanoyltransferase from Dichelobacter nodosus (strain VCS1703A).